Consider the following 350-residue polypeptide: tRNA-splicing endonuclease (350 aa).

Catalysis depends on residues tyrosine 286, histidine 297, and lysine 328.

Belongs to the tRNA-intron endonuclease family. Archaeal long subfamily. Homodimer.

It carries out the reaction pretRNA = a 3'-half-tRNA molecule with a 5'-OH end + a 5'-half-tRNA molecule with a 2',3'-cyclic phosphate end + an intron with a 2',3'-cyclic phosphate and a 5'-hydroxyl terminus.. Its function is as follows. Endonuclease that removes tRNA introns. Cleaves pre-tRNA at the 5'- and 3'-splice sites to release the intron. The products are an intron and two tRNA half-molecules bearing 2',3' cyclic phosphate and 5'-OH termini. Recognizes a pseudosymmetric substrate in which 2 bulged loops of 3 bases are separated by a stem of 4 bp. The protein is tRNA-splicing endonuclease of Methanosarcina acetivorans (strain ATCC 35395 / DSM 2834 / JCM 12185 / C2A).